A 161-amino-acid polypeptide reads, in one-letter code: Anthrone oxygenase tpcL (161 aa).

An N-linked (GlcNAc...) asparagine glycan is attached at N4. The next 4 membrane-spanning stretches (helical) occupy residues 15 to 35 (VITGSFLSGLMMGLSVVDIPV), 56 to 74 (IGHKMMPSLAVTTCLLYGY), 87 to 107 (LPHIIAAVTTISMVPFTWLVM), and 136 to 155 (WAQLHAVRSLFPLMGSVLGL).

It belongs to the anthrone oxygenase family. In terms of tissue distribution, specifically expressed in conidia.

The protein localises to the membrane. It catalyses the reaction emodin anthrone + O2 = emodin + H2O + H(+). The protein operates within secondary metabolite biosynthesis. Functionally, anthrone oxygenase; part of the gene cluster that mediates the biosynthesis of trypacidin, a mycotoxin with antiprotozoal activity and that plays a role in the infection process. The pathway begins with the synthesis of atrochrysone thioester by the polyketide synthase (PKS) tpcC. The atrochrysone carboxyl ACP thioesterase tpcB then breaks the thioester bond and releases the atrochrysone carboxylic acid from tpcC. The decarboxylase tpcK converts atrochrysone carboxylic acid to atrochrysone which is further reduced into emodin anthrone. The next step is performed by the emodin anthrone oxygenase tpcL that catalyzes the oxidation of emodinanthrone to emodin. Emodin O-methyltransferase encoded by tpcA catalyzes methylation of the 8-hydroxy group of emodin to form questin. Ring cleavage of questin by questin oxidase tpcI leads to desmethylsulochrin via several intermediates including questin epoxide. Another methylation step catalyzed by tpcM leads to the formation of sulochrin which is further converted to monomethylsulfochrin by tpcH. Finally, the tpcJ catalyzes the conversion of monomethylsulfochrin to trypacidin. Trypacidin is toxic for human pulmonary and bronchial epithelial cells by initiating the intracellular formation of nitric oxide (NO) and hydrogen peroxide (H(2)O(2)), thus triggering host necrotic cell death. The trypacidin pathway is also able to produce endocrocin via a distinct route from the endocrocin Enc pathway. The chain is Anthrone oxygenase tpcL from Aspergillus fumigatus (strain ATCC MYA-4609 / CBS 101355 / FGSC A1100 / Af293) (Neosartorya fumigata).